A 308-amino-acid polypeptide reads, in one-letter code: Probable manganese-dependent inorganic pyrophosphatase (308 aa).

Residues His-9, Asp-13, Asp-15, Asp-75, His-97, and Asp-149 each coordinate Mn(2+).

This sequence belongs to the PPase class C family. Mn(2+) serves as cofactor.

It is found in the cytoplasm. It catalyses the reaction diphosphate + H2O = 2 phosphate + H(+). The sequence is that of Probable manganese-dependent inorganic pyrophosphatase from Listeria innocua serovar 6a (strain ATCC BAA-680 / CLIP 11262).